The following is a 140-amino-acid chain: Putative pre-16S rRNA nuclease (140 aa).

The protein belongs to the YqgF nuclease family.

Its subcellular location is the cytoplasm. In terms of biological role, could be a nuclease involved in processing of the 5'-end of pre-16S rRNA. The protein is Putative pre-16S rRNA nuclease of Lachnospira eligens (strain ATCC 27750 / DSM 3376 / VPI C15-48 / C15-B4) (Eubacterium eligens).